A 237-amino-acid chain; its full sequence is Methylthioribulose-1-phosphate dehydratase (237 aa).

Residue cysteine 98 participates in substrate binding. Residues histidine 116 and histidine 118 each contribute to the Zn(2+) site. The Proton donor/acceptor role is filled by glutamate 140. Histidine 196 is a binding site for Zn(2+).

This sequence belongs to the aldolase class II family. MtnB subfamily. Zn(2+) is required as a cofactor.

The protein localises to the cytoplasm. It carries out the reaction 5-(methylsulfanyl)-D-ribulose 1-phosphate = 5-methylsulfanyl-2,3-dioxopentyl phosphate + H2O. It participates in amino-acid biosynthesis; L-methionine biosynthesis via salvage pathway; L-methionine from S-methyl-5-thio-alpha-D-ribose 1-phosphate: step 2/6. Catalyzes the dehydration of methylthioribulose-1-phosphate (MTRu-1-P) into 2,3-diketo-5-methylthiopentyl-1-phosphate (DK-MTP-1-P). This Laccaria bicolor (strain S238N-H82 / ATCC MYA-4686) (Bicoloured deceiver) protein is Methylthioribulose-1-phosphate dehydratase.